The following is a 573-amino-acid chain: WRKY transcription factor SUSIBA2 (573 aa).

2 disordered regions span residues 56-133 and 157-192; these read AHPD…CSRE and PAEV…DDGY. Residues 64-85 show a composition bias toward basic and acidic residues; the sequence is PRDKSVRNAHEDRGSRDFEFKP. Positions 108–122 are enriched in low complexity; sequence MQNQSMNPSSSSSNM. Polar residues predominate over residues 163 to 182; the sequence is SEPQQMNSSDNAMQEPQSEN. Basic and acidic residues predominate over residues 183–192; sequence VADKSADDGY. The WRKY 1 DNA-binding region spans 183-247; the sequence is VADKSADDGY…YKGRHNHPKP (65 aa). Positions 214, 219, 242, and 244 each coordinate Zn(2+). The tract at residues 240 to 332 is disordered; it reads GRHNHPKPQP…EDLESKRRKM (93 aa). Over residues 263-277 the composition is skewed to basic and acidic residues; the sequence is GEERYDGASAADDKS. The WRKY 2 DNA-binding region spans 357–422; the sequence is SEVDILDDGY…YEGKHNHEVP (66 aa). Residues cysteine 388, cysteine 393, histidine 417, and histidine 419 each contribute to the Zn(2+) site.

The protein belongs to the WRKY group I family. Expressed in endosperm, but not in leaves.

It is found in the nucleus. Transcription factor involved in starch synthesis. Acts as a transcriptional activator in sugar signaling. Interacts specifically with the SURE and W-box elements, but not with the SP8a element. This is WRKY transcription factor SUSIBA2 from Hordeum vulgare (Barley).